Consider the following 116-residue polypeptide: NADH-ubiquinone oxidoreductase chain 3 (116 aa).

The next 3 helical transmembrane spans lie at 8–28, 56–76, and 87–107; these read VAAT…LPSL, FFLV…LLPL, and ISLL…IYEW.

It belongs to the complex I subunit 3 family.

Its subcellular location is the mitochondrion membrane. It carries out the reaction a ubiquinone + NADH + 5 H(+)(in) = a ubiquinol + NAD(+) + 4 H(+)(out). Functionally, core subunit of the mitochondrial membrane respiratory chain NADH dehydrogenase (Complex I) that is believed to belong to the minimal assembly required for catalysis. Complex I functions in the transfer of electrons from NADH to the respiratory chain. The immediate electron acceptor for the enzyme is believed to be ubiquinone. The polypeptide is NADH-ubiquinone oxidoreductase chain 3 (MT-ND3) (Squalus acanthias (Spiny dogfish)).